The following is a 116-amino-acid chain: Small ribosomal subunit protein uS13 (116 aa).

The interval 92-116 (RRGLPVRGQNTKNNARTRKGTKRNR) is disordered. The span at 106-116 (ARTRKGTKRNR) shows a compositional bias: basic residues.

It belongs to the universal ribosomal protein uS13 family. As to quaternary structure, part of the 30S ribosomal subunit. Forms a loose heterodimer with protein S19. Forms two bridges to the 50S subunit in the 70S ribosome.

Its function is as follows. Located at the top of the head of the 30S subunit, it contacts several helices of the 16S rRNA. In the 70S ribosome it contacts the 23S rRNA (bridge B1a) and protein L5 of the 50S subunit (bridge B1b), connecting the 2 subunits; these bridges are implicated in subunit movement. Contacts the tRNAs in the A and P-sites. This is Small ribosomal subunit protein uS13 from Lactobacillus acidophilus (strain ATCC 700396 / NCK56 / N2 / NCFM).